Reading from the N-terminus, the 215-residue chain is Cytochrome b6 (215 aa).

The helical transmembrane segment at 32–52 (IFYCLGGITLTCFLVQVATGF) threads the bilayer. Cys35 contacts heme c. Heme b contacts are provided by His86 and His100. 3 helical membrane passes run 90-110 (ASMM…TGGF), 116-136 (LTWV…VTGY), and 186-206 (LHTF…FLMI). The heme b site is built by His187 and His202.

The protein belongs to the cytochrome b family. PetB subfamily. As to quaternary structure, the 4 large subunits of the cytochrome b6-f complex are cytochrome b6, subunit IV (17 kDa polypeptide, PetD), cytochrome f and the Rieske protein, while the 4 small subunits are PetG, PetL, PetM and PetN. The complex functions as a dimer. Heme b is required as a cofactor. Requires heme c as cofactor.

It localises to the plastid. It is found in the chloroplast thylakoid membrane. In terms of biological role, component of the cytochrome b6-f complex, which mediates electron transfer between photosystem II (PSII) and photosystem I (PSI), cyclic electron flow around PSI, and state transitions. In Nicotiana tabacum (Common tobacco), this protein is Cytochrome b6.